A 419-amino-acid polypeptide reads, in one-letter code: Interferon regulatory factor 3 (419 aa).

Threonine 3 carries the phosphothreonine modification. Residues 5–111 constitute a DNA-binding region (IRF tryptophan pentad repeat); the sequence is KPRILPWLIS…DPHKIYEFVT (107 aa). Serine 14 is subject to Phosphoserine. At threonine 75 the chain carries Phosphothreonine. Residues serine 97 and serine 123 each carry the phosphoserine modification. The disordered stretch occupies residues 118–137; sequence PEPDTSLDLSGRYSTSDTHE. The tract at residues 140–419 is mediates interaction with ZDHHC11; sequence LDKLLSGMDL…LRDLVEDMDF (280 aa). Lysine 191 participates in a covalent cross-link: Glycyl lysine isopeptide (Lys-Gly) (interchain with G-Cter in ISG15). The segment at 198 to 358 is interaction with HERC5; it reads DEWEFQVTVF…SWPQDEPWVK (161 aa). A phosphothreonine mark is found at threonine 235 and threonine 251. Cysteine 265 and cysteine 287 are disulfide-bonded. Glycyl lysine isopeptide (Lys-Gly) (interchain with G-Cter in ISG15) cross-links involve residues lysine 358 and lysine 364. N6-acetyllysine is present on lysine 364. Serine 383 carries the post-translational modification Phosphoserine. Serine 384 carries the diphosphoserine modification. Serine 384 carries the post-translational modification Phosphoserine; by TBK1. Phosphoserine; by IKKE is present on serine 394. The residue at position 396 (serine 396) is a Phosphoserine. Residue threonine 402 is modified to Phosphothreonine.

The protein belongs to the IRF family. As to quaternary structure, monomer. Homodimer; phosphorylation-induced. Interacts (when phosphorylated) with CREBBP. Interacts with MAVS (via phosphorylated pLxIS motif). Interacts with TICAM1 (via phosphorylated pLxIS motif). Interacts with STING1 (via phosphorylated pLxIS motif). Interacts with IKBKE and TBK1. Interacts with TICAM2. Interacts with RBCK1. Interacts with HERC5. Interacts with DDX3X; the interaction allows the phosphorylation and activation of IRF3 by IKBKE. Interacts with TRIM21 and ULK1, in the presence of TRIM21; this interaction leads to IRF3 degradation by autophagy. Interacts with RIOK3; RIOK3 probably mediates the interaction of TBK1 with IRF3. Interacts with ILRUN; the interaction inhibits IRF3 binding to its DNA consensus sequence. Interacts with LYAR; this interaction impairs IRF3 DNA-binding activity. Interacts with TRAF3. Interacts with ZDHHC11; ZDHHC11 recruits IRF3 to STING1 upon DNA virus infection and thereby promotes IRF3 activation. Interacts with HSP90AA1; the interaction mediates IRF3 association with TOMM70. Interacts with BCL2; the interaction decreases upon Sendai virus infection. Interacts with BAX; the interaction is direct, increases upon virus infection and mediates the formation of the apoptosis complex TOMM70:HSP90AA1:IRF3:BAX. Interacts with DDX56. Interacts with NBR1. In terms of assembly, (Microbial infection) Interacts with Porcine epidemic diarrhea virus E protein; this interaction prevents IRF3 translocation to the nucleus and thereby prevents type I interferon production. (Microbial infection) Interacts with African swine fever virus (ASFV) P14.5/E120R; this interaction interferes with the recruitment of IRF3 to TBK1, which in turn suppresses IRF3 phosphorylation, decreasing interferon production via the cGAS/STING pathway. As to quaternary structure, (Microbial infection) Interacts with African swine fever virus (ASFV) MGF360-14L; this interaction mediates degradation of IRF3 through TRIM21 and ubiquitin-meditated proteolysis. In terms of assembly, (Microbial infection) Interacts with African swine fever virus (ASFV) E301R; this interaction inhibits nuclear translocation of IRF3 to the nucleus. (Microbial infection) Interacts with African swine fever virus (ASFV) minor capsid protein M1249L; this interaction mediates IRF3 degradation. Constitutively phosphorylated on many Ser/Thr residues. Activated following phosphorylation by TBK1 and IKBKE. Innate adapter proteins, such as MAVS, STING1 or TICAM1, are first activated by viral RNA, cytosolic DNA, and bacterial lipopolysaccharide (LPS), respectively, leading to activation of the kinases TBK1 and IKBKE. These kinases then phosphorylate the adapter proteins on the pLxIS motif, leading to recruitment of IRF3, thereby licensing IRF3 for phosphorylation by TBK1. Phosphorylation at Ser-384 is followed by pyrophosphorylation at the same residue, promoting phosphorylation at Ser-394. Phosphorylated IRF3 dissociates from the adapter proteins, dimerizes, and then enters the nucleus to induce IFNs. Post-translationally, pyrophosphorylated by UAP1 following phosphorylation at Ser-384 by TBK1. Pyrophosphorylation promotes subsequent phosphorylation at Ser-394, leading to homodimerization of IRF3. In terms of processing, acetylation at Lys-364 by KAT8 inhibits recruimtent to promoters and transcription factor activity. Acetylation by KAT8 is promoted by phosphorylation at Ser-394. Ubiquitinated; ubiquitination involves RBCK1 leading to proteasomal degradation. Polyubiquitinated; ubiquitination involves TRIM21 leading to proteasomal degradation. Ubiquitinated by UBE3C, leading to its degradation. Deubiquitinated by USP5 on both 'Lys-48'-linked unanchored and 'Lys-63'-linked anchored polyubiquitin, leading to inhibition of antiviral innate immunity. Post-translationally, ISGylated by HERC5 resulting in sustained IRF3 activation and in the inhibition of IRF3 ubiquitination by disrupting PIN1 binding. The phosphorylation state of IRF3 does not alter ISGylation. In terms of processing, (Microbial infection) Phosphorylated by pseudorabies virus protein kinase UL13; leading to decreased IRF3 binding to the IRF3-responsive promoters and downstream ISG expression. Proteolytically cleaved by apoptotic caspases during apoptosis, leading to its inactivation. Cleavage by CASP3 during virus-induced apoptosis inactivates it, preventing cytokine overproduction.

The protein localises to the cytoplasm. It is found in the nucleus. It localises to the mitochondrion. Its activity is regulated as follows. In the absence of viral infection, maintained as a monomer in an autoinhibited state. Phosphorylation by TBK1 and IKBKE disrupts this autoinhibition leading to the liberation of the DNA-binding and dimerization activities and its nuclear localization where it can activate type I IFN and ISG genes. Phosphorylation and activation follow the following steps: innate adapter proteins, such as MAVS, STING1 or TICAM1, are first activated by viral RNA, cytosolic DNA and bacterial lipopolysaccharide (LPS), respectively, leading to activation of the kinases TBK1 and IKBKE. These kinases then phosphorylate the adapter proteins on their pLxIS motif, leading to recruitment of IRF3, thereby licensing IRF3 for phosphorylation by TBK1. Phosphorylated IRF3 dissociates from the adapter proteins, dimerizes, and then enters the nucleus to induce IFNs. Functionally, key transcriptional regulator of type I interferon (IFN)-dependent immune responses which plays a critical role in the innate immune response against DNA and RNA viruses. Regulates the transcription of type I IFN genes (IFN-alpha and IFN-beta) and IFN-stimulated genes (ISG) by binding to an interferon-stimulated response element (ISRE) in their promoters. Acts as a more potent activator of the IFN-beta (IFNB) gene than the IFN-alpha (IFNA) gene and plays a critical role in both the early and late phases of the IFNA/B gene induction. Found in an inactive form in the cytoplasm of uninfected cells and following viral infection, double-stranded RNA (dsRNA), or toll-like receptor (TLR) signaling, is phosphorylated by IKBKE and TBK1 kinases. This induces a conformational change, leading to its dimerization and nuclear localization and association with CREB binding protein (CREBBP) to form dsRNA-activated factor 1 (DRAF1), a complex which activates the transcription of the type I IFN and ISG genes. Can activate distinct gene expression programs in macrophages and can induce significant apoptosis in primary macrophages. The chain is Interferon regulatory factor 3 (IRF3) from Sus scrofa (Pig).